Consider the following 164-residue polypeptide: Protein SprT (164 aa).

A SprT-like domain is found at 14-156 (QQAETFFKRT…LCRRCREPLV (143 aa)). Position 69 (His-69) interacts with Zn(2+). The active site involves Glu-70. Zn(2+) is bound at residue His-73.

It belongs to the SprT family. The cofactor is Zn(2+).

It localises to the cytoplasm. The polypeptide is Protein SprT (Pseudomonas savastanoi pv. phaseolicola (strain 1448A / Race 6) (Pseudomonas syringae pv. phaseolicola (strain 1448A / Race 6))).